A 185-amino-acid polypeptide reads, in one-letter code: CASP-like protein 2C2 (185 aa).

At 1-22 (MAAAARVSEVKAEGLLRGACTA) the chain is on the cytoplasmic side. The chain crosses the membrane as a helical span at residues 23–43 (LAAAAALLVGLSTQTETVLLV). Over 44 to 53 (RKKATVKDVQ) the chain is Extracellular. Residues 54–74 (ALWVLAMAAAAAAGYHLLQLL) form a helical membrane-spanning segment. Residues 75 to 104 (KCLYLGRVGGARPCRRSSRALAWTCLLLDK) are Cytoplasmic-facing. The chain crosses the membrane as a helical span at residues 105–125 (ACAYTTFATTVAAAQACVVAL). At 126 to 146 (DGAHALQWTKLCNIYTRFCEQ) the chain is on the extracellular side. A helical transmembrane segment spans residues 147-167 (VAGSLVLGMLAAVGTAVLSAA). At 168-185 (SARNVFRHYASLETYAAH) the chain is on the cytoplasmic side.

Belongs to the Casparian strip membrane proteins (CASP) family. In terms of assembly, homodimer and heterodimers.

Its subcellular location is the cell membrane. This is CASP-like protein 2C2 from Zea mays (Maize).